The sequence spans 251 residues: UPF0246 protein TM1040_2658 (251 aa).

The protein belongs to the UPF0246 family.

This chain is UPF0246 protein TM1040_2658, found in Ruegeria sp. (strain TM1040) (Silicibacter sp.).